The primary structure comprises 426 residues: Glutamate-1-semialdehyde 2,1-aminomutase (426 aa).

The residue at position 265 (Lys-265) is an N6-(pyridoxal phosphate)lysine.

This sequence belongs to the class-III pyridoxal-phosphate-dependent aminotransferase family. HemL subfamily. As to quaternary structure, homodimer. Requires pyridoxal 5'-phosphate as cofactor.

The protein resides in the cytoplasm. The enzyme catalyses (S)-4-amino-5-oxopentanoate = 5-aminolevulinate. It functions in the pathway porphyrin-containing compound metabolism; protoporphyrin-IX biosynthesis; 5-aminolevulinate from L-glutamyl-tRNA(Glu): step 2/2. The chain is Glutamate-1-semialdehyde 2,1-aminomutase from Salmonella paratyphi A (strain ATCC 9150 / SARB42).